The sequence spans 620 residues: MAU2 chromatid cohesion factor homolog (620 aa).

TPR repeat units follow at residues 452-485 (GGFYYVQGLHAFHKNSFHEAKRFLRETLKMANAE) and 492-525 (SCSLVLLSHVFLSIGNSKESMNMVTPAMQLASKI).

It belongs to the SCC4/mau-2 family. In terms of assembly, interacts with Nipped-B to form the cohesin loading complex.

It localises to the nucleus. The protein resides in the nucleoplasm. Functionally, required for association of the cohesin complex with chromatin during interphase. Plays a role in sister chromatid cohesion and normal progression through prometaphase. The protein is MAU2 chromatid cohesion factor homolog of Drosophila persimilis (Fruit fly).